We begin with the raw amino-acid sequence, 840 residues long: Phosphatidylglycerol lysyltransferase (840 aa).

Residues 1 to 8 (MNQEVKNK) lie on the Cytoplasmic side of the membrane. A helical membrane pass occupies residues 9 to 29 (IFSILKITFATALFIFVVITL). At 30-52 (YRELSGINFKDTLVEFSKINRMS) the chain is on the extracellular side. Residues 53-73 (LVLLFIGGGASLVILSMYDVI) form a helical membrane-spanning segment. Over 74 to 89 (LSRALKMDISLGKVLR) the chain is Cytoplasmic. A helical membrane pass occupies residues 90-110 (VSYIINALNAIVGFGGFIGAG). At 111-128 (VRAMVYKNYTHDKKKLVH) the chain is on the extracellular side. The helical transmembrane segment at 129 to 149 (FISLILISMLTGLSLLSLLIV) threads the bilayer. Topologically, residues 150–161 (FHVFDASLILDK) are cytoplasmic. The chain crosses the membrane as a helical span at residues 162–182 (ITWVRWVLYVVSFFLPLFIIY). Over 183–200 (SMVRPPDKNNRFVGLYCT) the chain is Extracellular. Residues 201–221 (LVSCVEWLAAAVVLYFCGVIV) form a helical membrane-spanning segment. The Cytoplasmic segment spans residues 222–229 (DAHVSFMS). A helical membrane pass occupies residues 230–250 (FIAIFIIAALSGLVSFIPGGF). The Extracellular portion of the chain corresponds to 251-271 (GAFDLVVLLGFKTLGVPEEKV). A helical membrane pass occupies residues 272 to 292 (LLMLLLYRFAYYFVPVIIALI). Topologically, residues 293-337 (LSSFEFGTSAKKYIEGSKYFIPAKDVTSFLMSYQKDIIAKIPSLS) are cytoplasmic. The chain crosses the membrane as a helical span at residues 338–358 (LAILVFFTSMIFFVNNLTIVY). The Extracellular portion of the chain corresponds to 359-369 (DALYDGNHLTY). Residues 370–390 (YILLAIHTSACLLLLLNVVGI) traverse the membrane as a helical segment. Residues 391–394 (YKQS) lie on the Cytoplasmic side of the membrane. 2 helical membrane passes run 395-415 (RRAIIFAMISILLITVATFFT) and 416-436 (YASYILITWLAIIFVLLIVAF). The Cytoplasmic portion of the chain corresponds to 437–450 (RRARRLKRPVRMRN). A helical membrane pass occupies residues 451–471 (IVAMLLFSLFILYVNHIFIAG). Over 472 to 489 (TLYALDIYTIEMHTSVLR) the chain is Extracellular. The helical transmembrane segment at 490-510 (YYFWLTILIIAIIIGMIAWLF) threads the bilayer. Residues 511–840 (DYQFSKVRIS…SKVMRVIRHK (330 aa)) lie on the Cytoplasmic side of the membrane.

It belongs to the LPG synthase family.

The protein localises to the cell membrane. It catalyses the reaction L-lysyl-tRNA(Lys) + a 1,2-diacyl-sn-glycero-3-phospho-(1'-sn-glycerol) = a 1,2-diacyl-sn-glycero-3-phospho-1'-(3'-O-L-lysyl)-sn-glycerol + tRNA(Lys). In terms of biological role, catalyzes the transfer of a lysyl group from L-lysyl-tRNA(Lys) to membrane-bound phosphatidylglycerol (PG), which produces lysylphosphatidylglycerol (LPG), a major component of the bacterial membrane with a positive net charge. LPG synthesis contributes to bacterial virulence as it is involved in the resistance mechanism against cationic antimicrobial peptides (CAMP) produces by the host's immune system (defensins, cathelicidins) and by the competing microorganisms (bacteriocins). In fact, the modification of anionic phosphatidylglycerol with positively charged L-lysine results in repulsion of the peptides. The sequence is that of Phosphatidylglycerol lysyltransferase (mprF) from Staphylococcus aureus (strain MSSA476).